The chain runs to 400 residues: Na(+)/H(+) antiporter NhaA 1 (400 aa).

Helical transmembrane passes span 25–45 (IVLMFCAIIAIIIANSNFSSM), 67–87 (ILHWINDGLMAIFFLVVGMEI), 103–123 (ILPVSAAIGGMVVPAIIYALF), 130–150 (IIGWGIPMATDIAFALGILSL), 159–179 (IIIFLTALAIVDDLGAIIVIA), 184–204 (SEISWIALILGLIIFLAIILA), 213–233 (WLYIIFGIALWICFLKSGVHE), 264–284 (VLTPLSSFIIMPIFALANSGI), 303–323 (IIFGLFIGKQIGIFGASYILV), 339–359 (LYGASVLGGIGFTMSLFVSSL), and 372–392 (ISIIIASILSAAFGAAIFKII).

It belongs to the NhaA Na(+)/H(+) (TC 2.A.33) antiporter family.

It localises to the cell membrane. The catalysed reaction is Na(+)(in) + 2 H(+)(out) = Na(+)(out) + 2 H(+)(in). Functionally, na(+)/H(+) antiporter that extrudes sodium in exchange for external protons. The polypeptide is Na(+)/H(+) antiporter NhaA 1 (Clostridium beijerinckii (strain ATCC 51743 / NCIMB 8052) (Clostridium acetobutylicum)).